The sequence spans 119 residues: V-type proton ATPase subunit F (119 aa).

It belongs to the V-ATPase F subunit family. V-ATPase is a heteromultimeric enzyme composed of a peripheral catalytic V1 complex (components A to H) attached to an integral membrane V0 proton pore complex (components: a, c, c', c'', d, e, f and VOA1).

The protein resides in the vacuole membrane. Functionally, subunit of the V1 complex of vacuolar(H+)-ATPase (V-ATPase), a multisubunit enzyme composed of a peripheral complex (V1) that hydrolyzes ATP and a membrane integral complex (V0) that translocates protons. V-ATPase is responsible for acidifying and maintaining the pH of intracellular compartments. The polypeptide is V-type proton ATPase subunit F (VMA7) (Vanderwaltozyma polyspora (strain ATCC 22028 / DSM 70294 / BCRC 21397 / CBS 2163 / NBRC 10782 / NRRL Y-8283 / UCD 57-17) (Kluyveromyces polysporus)).